The primary structure comprises 145 residues: Neutral phospholipase A2 paradoxin-like beta chain (145 aa).

Residues 1–27 form the signal peptide; the sequence is MHPAHLLVLLAVCVSLLGASDIPPLPL. 7 disulfides stabilise this stretch: Cys-38–Cys-98, Cys-54–Cys-144, Cys-56–Cys-72, Cys-71–Cys-125, Cys-78–Cys-118, Cys-87–Cys-111, and Cys-105–Cys-116.

Belongs to the phospholipase A2 family. Group I subfamily. N49 sub-subfamily. As to quaternary structure, heterotrimer of alpha, beta, and gamma chains; non-covalently linked. Expressed by the venom gland.

It is found in the secreted. Its function is as follows. Heterotrimer: Snake venom phospholipase A2 (PLA2) heterotrimer that acts as a potent presynaptic neurotoxin by blocking synaptic transmission and synaptic vesicle recycling. May act by binding in a calcium-dependent fashion to neurotonal pentraxin-1 (NPTX1) and neurotonal pentraxin-2 (NPTX2), but not to neuronal pentraxin receptor (NPTXR). Also binds to taipoxin-associated calcium binding protein 49 (RCN2), a protein localized in the lumen of endoplasmic reticulum. In terms of biological role, monomer (beta chain): Snake venom phospholipase A2 homolog that is neither toxic nor enzymatically active. Does not bind calcium. The sequence is that of Neutral phospholipase A2 paradoxin-like beta chain from Oxyuranus microlepidotus (Inland taipan).